We begin with the raw amino-acid sequence, 232 residues long: Ribonuclease 3 (232 aa).

The region spanning 10–135 (ALKIYEATGY…LIGAMYMDGG (126 aa)) is the RNase III domain. Residue Glu48 coordinates Mg(2+). The active site involves Asp52. The Mg(2+) site is built by Asn121 and Glu124. Glu124 is a catalytic residue. The DRBM domain maps to 161 to 230 (DPKTALQEWV…AKLMLKKITE (70 aa)).

This sequence belongs to the ribonuclease III family. Homodimer. It depends on Mg(2+) as a cofactor.

Its subcellular location is the cytoplasm. It carries out the reaction Endonucleolytic cleavage to 5'-phosphomonoester.. In terms of biological role, digests double-stranded RNA. Involved in the processing of primary rRNA transcript to yield the immediate precursors to the large and small rRNAs (23S and 16S). Processes some mRNAs, and tRNAs when they are encoded in the rRNA operon. Processes pre-crRNA and tracrRNA of type II CRISPR loci if present in the organism. The sequence is that of Ribonuclease 3 from Anaplasma marginale (strain St. Maries).